Here is a 352-residue protein sequence, read N- to C-terminus: C-C chemokine receptor type 5 (352 aa).

Residues 1-30 (MDYQVSSPTYDIDYYTSEPCQKINVKQIAA) are Extracellular-facing. Position 3 is a sulfotyrosine (Tyr3). O-linked (GalNAc...) serine glycosylation is found at Ser6 and Ser7. 3 positions are modified to sulfotyrosine: Tyr10, Tyr14, and Tyr15. 2 disulfide bridges follow: Cys20-Cys269 and Cys101-Cys178. The helical transmembrane segment at 31–58 (RLLPPLYSLVFIFGFVGNILVVLILINC) threads the bilayer. Residues 59–68 (KRLKSMTDIY) lie on the Cytoplasmic side of the membrane. The helical transmembrane segment at 69-89 (LLNLAISDLLFLLTVPFWAHY) threads the bilayer. Residues 90–102 (AAAQWDFGNTMCQ) are Extracellular-facing. A helical transmembrane segment spans residues 103–124 (LLTGLYFIGFFSGIFFIILLTI). The Cytoplasmic portion of the chain corresponds to 125–141 (DRYLAIVHAVFALKART). Residues 142–166 (VTFGVVTSVITWVVAVFASLPGIIF) form a helical membrane-spanning segment. The Extracellular segment spans residues 167–198 (TRSQREGLHYTCSSHFPYSQYQFWKNFQTLKM). Residues 199-218 (VILGLVLPLLVMVICYSGIL) traverse the membrane as a helical segment. Over 219–235 (KTLLRCRNEKKRHRAVR) the chain is Cytoplasmic. A helical membrane pass occupies residues 236–260 (LIFTIMIVYFLFWAPYNIVLLLNTF). At 261–277 (QEFFGLNNCSSSNRLDQ) the chain is on the extracellular side. A helical membrane pass occupies residues 278–301 (AMQVTETLGMTHCCINPIIYAFVG). At 302–352 (EKFRNYLLVFFQKHIAKRFCKCCSIFQQEAPERASSVYTRSTAEQEISVGL) the chain is on the cytoplasmic side. S-palmitoyl cysteine attachment occurs at residues Cys321, Cys323, and Cys324. 4 positions are modified to phosphoserine; by BARK1: Ser336, Ser337, Ser342, and Ser349.

It belongs to the G-protein coupled receptor 1 family. Interacts with PRAF2. Efficient ligand binding to CCL3/MIP-1alpha and CCL4/MIP-1beta requires sulfation, O-glycosylation and sialic acid modifications. Glycosylation on Ser-6 is required for efficient binding of CCL4. Interacts with GRK2. Interacts with ARRB1 and ARRB2. Interacts with CNIH4. Interacts with S100A4; this interaction stimulates T-lymphocyte chemotaxis. In terms of processing, sulfated on at least 2 of the N-terminal tyrosines. Sulfation is required for efficient binding of the chemokines, CCL3 and CCL4. Post-translationally, palmitoylation in the C-terminal is important for cell surface expression. Phosphorylation on serine residues in the C-terminal is stimulated by binding CC chemokines especially by APO-RANTES. In terms of processing, O-glycosylated, but not N-glycosylated. Ser-6 appears to be the major site even if Ser-7 may be also O-glycosylated. Also sialylated glycans present which contribute to chemokine binding. Thr-16 and Ser-17 may also be glycosylated and, if so, with small moieties such as a T-antigen.

The protein resides in the cell membrane. Receptor for a number of inflammatory CC-chemokines including CCL3/MIP-1-alpha, CCL4/MIP-1-beta and RANTES and subsequently transduces a signal by increasing the intracellular calcium ion level. May play a role in the control of granulocytic lineage proliferation or differentiation. Participates in T-lymphocyte migration to the infection site by acting as a chemotactic receptor. The protein is C-C chemokine receptor type 5 (CCR5) of Macaca arctoides (Stump-tailed macaque).